We begin with the raw amino-acid sequence, 392 residues long: Iripin-1 (392 aa).

An N-terminal signal peptide occupies residues 1–16 (MKPLVPLLFLLVSCRA). Asparagine 104, asparagine 196, and asparagine 265 each carry an N-linked (GlcNAc...) asparagine glycan.

This sequence belongs to the serpin family. As to quaternary structure, interacts with human KLKB1. Interacts with human ST14. Interacts with human PLG (plasmin). In terms of tissue distribution, highly expressed in salivary gland. Expressed in midgut and ovary.

It localises to the secreted. Serine protease inhibitor that modulates blood feeding of ticks on vertebrate species. Modestly inhibits human trypsin, plasma kallikrein (KLKB1), matriptase (ST14) and plasmin (PLG) via a classic serpin inhibitory mechanism. Modestly reduces enzymatic activity of human alpha-chymotrypsin, coagulation factor Xa (F10), factor XIIa (F12), cathepsin G (CTSG), tPA/tissue-type plasminogen activator (PLAT) and uPA/urokinase-type plasminogen activator (PLAU). Probably acts as a substrate rather than an inhibitor for the human neutrophil elastase (ELANE) and thus reduces its enzymatic activity in in vitro assays. Decreases expression of adhesion molecules VCAM1 and CD99 on the surface of human cells. Increases the production of chemokines for neutrophils and monocytes, such as KC/CXCL1, MIP-2/CXCL2 and MIP-1/CCL2, and anti-inflammatory cytokine IL10 in mouse inflammation models. Reduces the recruitment of mouse neutrophils and monocytes to the site of inflammation. Decreases expression of CXCR2 on the surface of mouse neutrophils. Increases expression of integrin ITGAM/ITGB2 on the surface of mouse neutrophils. The protein is Iripin-1 of Ixodes ricinus (Common tick).